Here is a 537-residue protein sequence, read N- to C-terminus: P2Y purinoceptor 4 (537 aa).

At 1–49 the chain is on the extracellular side; that stretch reads MTEDIMATSYPTFLTTPYLPMKLLMNLTNDTEDICVFDEGFKFLLLPVS. 2 N-linked (GlcNAc...) asparagine glycosylation sites follow: Asn26 and Asn29. Residues 50–70 form a helical membrane-spanning segment; that stretch reads YSAVFMVGLPLNIAAMWIFIA. Over 71 to 79 the chain is Cytoplasmic; it reads KMRPWNPTT. Residues 80–100 traverse the membrane as a helical segment; sequence VYMFNLALSDTLYVLSLPTLV. Residues 101–118 are Extracellular-facing; sequence YYYADKNNWPFGEVLCKL. Cys116 and Cys193 are joined by a disulfide. The helical transmembrane segment at 119–139 threads the bilayer; the sequence is VRFLFYANLYSSILFLTCISV. Topologically, residues 140–161 are cytoplasmic; it reads HRYRGVCHPITSLRRMNAKHAY. Residues 162 to 182 form a helical membrane-spanning segment; the sequence is VICALVWLSVTLCLVPNLIFV. The Extracellular portion of the chain corresponds to 183–210; sequence TVSPKVKNTICHDTTRPEDFARYVEYST. Residues 211-231 form a helical membrane-spanning segment; sequence AIMCLLFGIPCLIIAGCYGLM. The Cytoplasmic segment spans residues 232 to 254; it reads TRELMKPIVSGNQQTLPSYKKRS. Residues 255-275 form a helical membrane-spanning segment; sequence IKTIIFVMIAFAICFMPFHIT. Residues 276–292 lie on the Extracellular side of the membrane; it reads RTLYYYARLLGIKCYAL. The chain crosses the membrane as a helical span at residues 293 to 316; that stretch reads NVINVTYKVTRPLASANSCIDPIL. The Cytoplasmic portion of the chain corresponds to 317-537; that stretch reads YFLANDRYRR…EKELQNFPKA (221 aa). The disordered stretch occupies residues 401–505; it reads NRRSTIKRNS…GEGTSTWNLL (105 aa). 2 stretches are compositionally biased toward basic and acidic residues: residues 409 to 423 and 431 to 447; these read NSTD…RHGE and VVEK…RKTT. Over residues 448-465 the composition is skewed to polar residues; the sequence is EQSSKTNAEQDELQTQID.

The protein belongs to the G-protein coupled receptor 1 family.

It is found in the cell membrane. In terms of biological role, receptor for extracellular ATP, UTP, CTP, GTP and ITP. The activity of this receptor is mediated by G proteins which activate a phosphatidylinositol-calcium second messenger system. May play a key role in the early development of neural tissue. The polypeptide is P2Y purinoceptor 4 (p2ry4) (Xenopus laevis (African clawed frog)).